We begin with the raw amino-acid sequence, 375 residues long: CD2 homolog (375 aa).

An N-terminal signal peptide occupies residues 1–16 (MIIILIFLIIPNIVLS). Residues 17–207 (IDYWVSFNKT…YLDFFQVASY (191 aa)) are Extracellular-facing. 9 N-linked (GlcNAc...) asparagine; by host glycosylation sites follow: Asn-24, Asn-80, Asn-105, Asn-122, Asn-134, Asn-145, Asn-168, Asn-176, and Asn-183. 2 cysteine pairs are disulfide-bonded: Cys-123–Cys-190 and Cys-130–Cys-173. Residues 208 to 228 (MFYMIIFIATGIIASIFISII) traverse the membrane as a helical segment. Over 229–375 (TFLSLRKRKK…ISLIHVDRII (147 aa)) the chain is Cytoplasmic. Residues 242–278 (EIESPSPSESNEEEQCQHDDTTSIHEPSPREPLLPKP) are disordered. Residues 256–270 (QCQHDDTTSIHEPSP) show a composition bias toward basic and acidic residues. 5 tandem repeats follow at residues 305–310 (KLCPPP), 311–316 (KPCPPP), 317–322 (KPCPPP), 323–328 (KPCPPP), and 329–334 (KPCPSS). The segment at 305 to 334 (KLCPPPKPCPPPKPCPPPKPCPPPKPCPSS) is 5 X 6 AA tandem repeats of K-[LP]-C-[PRS]-[PS]-[PS]. Residues 323-350 (KPCPPPKPCPSSESCSPPESYSLPKPLP) are disordered. Low complexity predominate over residues 332 to 346 (PSSESCSPPESYSLP).

Belongs to the asfivirus CD2 homolog protein family. In terms of assembly, both glycosylated and nonglycosylated forms interact (via C-terminus) with the host AP-1 complex. In terms of processing, cleaved into two fragments of 63 kDa and 26 kDa containing respectively the glycosylated N-terminus and the nonglycosylated C-terminus. A full-length 89-kDa glycosylated form also exists.

Its subcellular location is the host membrane. The protein localises to the virion membrane. The protein resides in the host Golgi apparatus. Its function is as follows. May play an immunosuppressive role by inhibiting lymphocyte proliferation and subsequently facilitating viral replication and generalization of infection. Responsible for viral hemadsorption, which may help viral spread. Increases virus replication in the tick vector at the step of virus uptake or replication in the tick gut. May play a role in the host Golgi reorganization to yield viral factories. May play a role in host cell penetration. This Ornithodoros (relapsing fever ticks) protein is CD2 homolog.